Here is a 402-residue protein sequence, read N- to C-terminus: Oxysterol-binding protein 12 (402 aa).

Residues 333-366 (NNNNDKETAEEKAKIEEKQRKEESERREKGILWE) are disordered. Basic and acidic residues predominate over residues 336-366 (NDKETAEEKAKIEEKQRKEESERREKGILWE).

It belongs to the OSBP family.

The sequence is that of Oxysterol-binding protein 12 (osbL) from Dictyostelium discoideum (Social amoeba).